Reading from the N-terminus, the 98-residue chain is NADH-ubiquinone oxidoreductase chain 4L (98 aa).

The next 3 helical transmembrane spans lie at 1–21 (MSIVYMNVMLAFMIALIGTLL), 29–49 (SLMCLEGMMLAMYIFISLISL), and 59–79 (VPLIILVFAACEAALGLALLV).

This sequence belongs to the complex I subunit 4L family. In terms of assembly, core subunit of respiratory chain NADH dehydrogenase (Complex I) which is composed of 45 different subunits.

It is found in the mitochondrion inner membrane. It carries out the reaction a ubiquinone + NADH + 5 H(+)(in) = a ubiquinol + NAD(+) + 4 H(+)(out). Its function is as follows. Core subunit of the mitochondrial membrane respiratory chain NADH dehydrogenase (Complex I) which catalyzes electron transfer from NADH through the respiratory chain, using ubiquinone as an electron acceptor. Part of the enzyme membrane arm which is embedded in the lipid bilayer and involved in proton translocation. The polypeptide is NADH-ubiquinone oxidoreductase chain 4L (MT-ND4L) (Hemiechinus auritus (Long-eared hedgehog)).